The following is a 119-amino-acid chain: Ribonuclease P protein component (119 aa).

It belongs to the RnpA family. As to quaternary structure, consists of a catalytic RNA component (M1 or rnpB) and a protein subunit.

It carries out the reaction Endonucleolytic cleavage of RNA, removing 5'-extranucleotides from tRNA precursor.. In terms of biological role, RNaseP catalyzes the removal of the 5'-leader sequence from pre-tRNA to produce the mature 5'-terminus. It can also cleave other RNA substrates such as 4.5S RNA. The protein component plays an auxiliary but essential role in vivo by binding to the 5'-leader sequence and broadening the substrate specificity of the ribozyme. The protein is Ribonuclease P protein component of Streptococcus pyogenes serotype M12 (strain MGAS2096).